A 397-amino-acid polypeptide reads, in one-letter code: uncharacterized protein (397 aa).

Helical transmembrane passes span 9–29, 38–58, 85–105, 112–132, 148–168, 182–202, 226–246, 271–291, 310–330, 331–351, and 365–385; these read NAVL…GFLT, LLAS…GAQL, FLAA…VGGA, IFGI…ILIF, MGFI…PPVV, PIAI…FAGA, AILI…GVVS, VLFG…AAYT, WIIA…KPAA, VLVF…ALIL, and HPVF…ILSG.

It belongs to the NRAMP family.

It localises to the cell membrane. This is an uncharacterized protein from Haemophilus influenzae (strain ATCC 51907 / DSM 11121 / KW20 / Rd).